The following is a 408-amino-acid chain: Diguanylate cyclase DgcN (408 aa).

The Cytoplasmic portion of the chain corresponds to 1–24 (MMDNDNSLNKRPTFKRALRNISMT). A helical transmembrane segment spans residues 25 to 45 (SIFITMMLIWLLLSVTSVLTL). The Periplasmic segment spans residues 46–52 (KQYAQKN). The helical transmembrane segment at 53 to 73 (LALTAATMTYSLEAAVVFADG) threads the bilayer. Topologically, residues 74–112 (PAATETLAALGQQGQFSTAEVRDKQQNILASWHYTRKDP) are cytoplasmic. Residues 113-133 (GDTFSNFISHWLFPAPIIQPI) traverse the membrane as a helical segment. Topologically, residues 134–154 (RHNGETIGEVRLTARDSSISH) are periplasmic. A helical membrane pass occupies residues 155-175 (FIWFSLAVLTGCILLASGIAI). The Cytoplasmic segment spans residues 176 to 408 (TLTRHLHNGL…KHQRAEKLVR (233 aa)). Positions 183–236 (NGLVEALKNITDVVHDVRSNRNFSRRVSEERIAEFHRFALDFNSLLDEMEEWQL) constitute an HAMP domain. A GGDEF domain is found at 278–408 (KTSALLFLDG…KHQRAEKLVR (131 aa)). D286 is a binding site for Mg(2+). 3 residues coordinate substrate: N294, H299, and D303. Position 329 (D329) interacts with Mg(2+). D329 (proton acceptor) is an active-site residue.

As to quaternary structure, homodimer. Interacts with the cell division proteins FtsZ and ZipA. Requires Mg(2+) as cofactor.

Its subcellular location is the cell inner membrane. It catalyses the reaction 2 GTP = 3',3'-c-di-GMP + 2 diphosphate. Its pathway is purine metabolism; 3',5'-cyclic di-GMP biosynthesis. Its activity is regulated as follows. Inhibited by YfiR, which prevents relocation to the midcell. A reductive stress signal is required to inactivate YfiR and turn on the DGC activity of DgcN. Bifunctional protein that catalyzes the synthesis of cyclic-di-GMP (c-di-GMP) in response to reductive stress and then dynamically relocates to the division site to arrest cell division in response to envelope stress. In the presence of high intracellular c-di-GMP levels, and in response to envelope stress, interacts with cell division proteins and halts cell division, without disassembling the Z ring, but by blocking its further progress toward cytokinesis. Part of a network that regulates cell motility by altering levels of c-di-GMP. This is Diguanylate cyclase DgcN from Escherichia coli (strain K12).